The primary structure comprises 358 residues: E3 ubiquitin-protein ligase RFI2 (358 aa).

The segment at 1 to 34 is disordered; it reads MAGAKDSGCDDDLRIAGGCDPGKRGNPEDSSSPV. The segment at 38-83 adopts an RING-type; atypical zinc-finger fold; it reads CSICLESVLDDGTRSKAKLQCGHQFHLDCIGSAFNMKGAMQCPNCR. Disordered stretches follow at residues 174–201 and 248–313; these read GPAATPRTSDNNSTDDHPWNSHSNDHFH and SNQR…DQNV. Residues 187–201 show a composition bias toward basic and acidic residues; that stretch reads TDDHPWNSHSNDHFH. Positions 248-266 are enriched in polar residues; sequence SNQRSSPAINSYQGSSTQM. A compositionally biased stretch (pro residues) spans 299–309; the sequence is LPPPPPPPPMP.

Its subcellular location is the nucleus. The catalysed reaction is S-ubiquitinyl-[E2 ubiquitin-conjugating enzyme]-L-cysteine + [acceptor protein]-L-lysine = [E2 ubiquitin-conjugating enzyme]-L-cysteine + N(6)-ubiquitinyl-[acceptor protein]-L-lysine.. It participates in protein modification; protein ubiquitination. In terms of biological role, mediates phytochrome (phyA and phyB)-controlled seedling deetiolation responses such as hypocotyl elongation in response to red and far-red light. Required for light-induced expression of LHCB3 and CHALCONE SYNTHASE (CHS). Negatively regulates CONSTANS (CO) and FLOWERING LOCUS T (FT) expression and photoperiodic flowering. The polypeptide is E3 ubiquitin-protein ligase RFI2 (Arabidopsis thaliana (Mouse-ear cress)).